The following is a 113-amino-acid chain: Small ribosomal subunit protein bS6 (113 aa).

It belongs to the bacterial ribosomal protein bS6 family.

In terms of biological role, binds together with bS18 to 16S ribosomal RNA. The polypeptide is Small ribosomal subunit protein bS6 (Flavobacterium johnsoniae (strain ATCC 17061 / DSM 2064 / JCM 8514 / BCRC 14874 / CCUG 350202 / NBRC 14942 / NCIMB 11054 / UW101) (Cytophaga johnsonae)).